We begin with the raw amino-acid sequence, 72 residues long: MFHCPLCQHAAHARTSRYITDTTKERYHQCQNVNCSATFITYESVQRYIVKPGEVHVVRPHPLPSGQQIMWM.

In terms of biological role, cryptic version of the phage P2 OGR protein which acts as an activator of P2 late transcription. This Escherichia coli (strain K12) protein is Prophage late control protein OgrK (ogrK).